The chain runs to 144 residues: Large ribosomal subunit protein uL16 (144 aa).

Belongs to the universal ribosomal protein uL16 family. In terms of assembly, part of the 50S ribosomal subunit.

In terms of biological role, binds 23S rRNA and is also seen to make contacts with the A and possibly P site tRNAs. This is Large ribosomal subunit protein uL16 from Clostridium botulinum (strain Alaska E43 / Type E3).